Here is a 408-residue protein sequence, read N- to C-terminus: 8-amino-7-oxononanoate synthase (408 aa).

Arginine 20 is a substrate binding site. 119-120 (GY) lines the pyridoxal 5'-phosphate pocket. Position 144 (histidine 144) interacts with substrate. 3 residues coordinate pyridoxal 5'-phosphate: serine 190, histidine 218, and threonine 246. Residue lysine 249 is modified to N6-(pyridoxal phosphate)lysine. Residue threonine 372 coordinates substrate.

Belongs to the class-II pyridoxal-phosphate-dependent aminotransferase family. BioF subfamily. In terms of assembly, homodimer. The cofactor is pyridoxal 5'-phosphate.

It carries out the reaction 6-carboxyhexanoyl-[ACP] + L-alanine + H(+) = (8S)-8-amino-7-oxononanoate + holo-[ACP] + CO2. It participates in cofactor biosynthesis; biotin biosynthesis. Its function is as follows. Catalyzes the decarboxylative condensation of pimeloyl-[acyl-carrier protein] and L-alanine to produce 8-amino-7-oxononanoate (AON), [acyl-carrier protein], and carbon dioxide. This is 8-amino-7-oxononanoate synthase from Leptothrix cholodnii (strain ATCC 51168 / LMG 8142 / SP-6) (Leptothrix discophora (strain SP-6)).